The following is an 85-amino-acid chain: Antitoxin VapB4 (85 aa).

It belongs to the phD/YefM antitoxin family. In terms of assembly, interacts with cognate toxin VapC4.

In terms of biological role, antitoxin component of a type II toxin-antitoxin (TA) system. Antitoxin that counteracts the effect of the VapC4 toxin. The polypeptide is Antitoxin VapB4 (vapB4) (Mycobacterium tuberculosis (strain CDC 1551 / Oshkosh)).